The chain runs to 150 residues: Large ribosomal subunit protein bL9 (150 aa).

It belongs to the bacterial ribosomal protein bL9 family.

Its function is as follows. Binds to the 23S rRNA. The protein is Large ribosomal subunit protein bL9 of Verminephrobacter eiseniae (strain EF01-2).